Reading from the N-terminus, the 955-residue chain is 2-oxoglutarate dehydrogenase E1 component (955 aa).

It belongs to the alpha-ketoglutarate dehydrogenase family. As to quaternary structure, homodimer. Part of the 2-oxoglutarate dehydrogenase (OGDH) complex composed of E1 (2-oxoglutarate dehydrogenase), E2 (dihydrolipoamide succinyltransferase) and E3 (dihydrolipoamide dehydrogenase); the complex contains multiple copies of the three enzymatic components (E1, E2 and E3). Requires thiamine diphosphate as cofactor.

The enzyme catalyses N(6)-[(R)-lipoyl]-L-lysyl-[protein] + 2-oxoglutarate + H(+) = N(6)-[(R)-S(8)-succinyldihydrolipoyl]-L-lysyl-[protein] + CO2. Its function is as follows. E1 component of the 2-oxoglutarate dehydrogenase (OGDH) complex which catalyzes the decarboxylation of 2-oxoglutarate, the first step in the conversion of 2-oxoglutarate to succinyl-CoA and CO(2). This chain is 2-oxoglutarate dehydrogenase E1 component, found in Bacillus cereus (strain G9842).